We begin with the raw amino-acid sequence, 160 residues long: Transmembrane protein 191A (160 aa).

A helical membrane pass occupies residues 24–44 (FCFPLDFVSNLFWIFASKFII).

It belongs to the TMEM191 family.

The protein localises to the membrane. This Homo sapiens (Human) protein is Transmembrane protein 191A (TMEM191A).